The chain runs to 235 residues: 15,16-dihydrobiliverdin:ferredoxin oxidoreductase (235 aa).

This sequence belongs to the HY2 family.

It carries out the reaction 15,16-dihydrobiliverdin + oxidized 2[4Fe-4S]-[ferredoxin] = biliverdin IXalpha + reduced 2[4Fe-4S]-[ferredoxin] + 2 H(+). Catalyzes the two-electron reduction of biliverdin IX-alpha at the C15 methine bridge. The polypeptide is 15,16-dihydrobiliverdin:ferredoxin oxidoreductase (Synechococcus sp. (strain CC9902)).